Reading from the N-terminus, the 103-residue chain is Co-chaperonin GroES (103 aa).

The protein belongs to the GroES chaperonin family. Heptamer of 7 subunits arranged in a ring. Interacts with the chaperonin GroEL.

The protein resides in the cytoplasm. In terms of biological role, together with the chaperonin GroEL, plays an essential role in assisting protein folding. The GroEL-GroES system forms a nano-cage that allows encapsulation of the non-native substrate proteins and provides a physical environment optimized to promote and accelerate protein folding. GroES binds to the apical surface of the GroEL ring, thereby capping the opening of the GroEL channel. This is Co-chaperonin GroES from Microcystis aeruginosa (strain NIES-843 / IAM M-2473).